We begin with the raw amino-acid sequence, 89 residues long: MGLAKEHKTEIITKFGDSATDTGKAEVQVALFSRRIADLTGHLQQHPKDKHSRRGLLMLVGKRKRVLNYLKKVDIERYRKVLADLDLRK.

It belongs to the universal ribosomal protein uS15 family. Part of the 30S ribosomal subunit. Forms a bridge to the 50S subunit in the 70S ribosome, contacting the 23S rRNA.

In terms of biological role, one of the primary rRNA binding proteins, it binds directly to 16S rRNA where it helps nucleate assembly of the platform of the 30S subunit by binding and bridging several RNA helices of the 16S rRNA. Functionally, forms an intersubunit bridge (bridge B4) with the 23S rRNA of the 50S subunit in the ribosome. The polypeptide is Small ribosomal subunit protein uS15 (Chlorobaculum parvum (strain DSM 263 / NCIMB 8327) (Chlorobium vibrioforme subsp. thiosulfatophilum)).